A 616-amino-acid polypeptide reads, in one-letter code: Chaperone protein HscA homolog (616 aa).

This sequence belongs to the heat shock protein 70 family.

Functionally, chaperone involved in the maturation of iron-sulfur cluster-containing proteins. Has a low intrinsic ATPase activity which is markedly stimulated by HscB. The chain is Chaperone protein HscA homolog from Aliivibrio fischeri (strain MJ11) (Vibrio fischeri).